We begin with the raw amino-acid sequence, 229 residues long: DNA polymerase III subunit epsilon (229 aa).

Aspartate 10 and glutamate 12 together coordinate a divalent metal cation. Substrate contacts are provided by aspartate 10, glutamate 12, glutamate 55, and histidine 60. The active-site Proton acceptor is the histidine 156. Aspartate 161 is a binding site for a divalent metal cation. A substrate-binding site is contributed by aspartate 161.

DNA polymerase III contains a core (composed of alpha, epsilon and theta chains) that associates with a tau subunit. This core dimerizes to form the POLIII' complex. PolIII' associates with the gamma complex (composed of gamma, delta, delta', psi and chi chains) and with the beta chain to form the complete DNA polymerase III complex. Mg(2+) is required as a cofactor. It depends on Mn(2+) as a cofactor.

The enzyme catalyses DNA(n) + a 2'-deoxyribonucleoside 5'-triphosphate = DNA(n+1) + diphosphate. Functionally, DNA polymerase III is a complex, multichain enzyme responsible for most of the replicative synthesis in bacteria. The epsilon subunit contain the editing function and is a proofreading 3'-5' exonuclease. In Rickettsia prowazekii (strain Madrid E), this protein is DNA polymerase III subunit epsilon (dnaQ).